The sequence spans 515 residues: Germ cell-less protein-like 1 (515 aa).

Residues 1–35 (MGSLSSRVLRQPRPALAQQAQGARAGGSARRPDTG) form a disordered region. Over residues 11-29 (QPRPALAQQAQGARAGGSA) the composition is skewed to low complexity. Residues 49 to 55 (SHKRKRS) carry the Nuclear localization signal motif. The tract at residues 65 to 85 (DSETDEDEEEGDEQQRLLNTP) is disordered. S66 is modified (phosphoserine). The span at 67-76 (ETDEDEEEGD) shows a compositional bias: acidic residues. Position 68 is a phosphothreonine (T68). A Nuclear localization signal motif is present at residues 85–91 (PRRKKLK). The 71-residue stretch at 108 to 178 (SDIKICALGE…LYRDDVLIKP (71 aa)) folds into the BTB domain.

In terms of assembly, interacts with TMPO-beta, TSG101 and TFDP2. Interacts with EMD.

The protein localises to the nucleus matrix. In terms of biological role, possible function in spermatogenesis. Enhances the degradation of MDM2 and increases the amount of p53 probably by modulating the nucleocytoplasmic transport. This is Germ cell-less protein-like 1 (GMCL1) from Homo sapiens (Human).